The sequence spans 338 residues: Phenylalanine--tRNA ligase alpha subunit (338 aa).

Mg(2+) is bound at residue Glu-253.

This sequence belongs to the class-II aminoacyl-tRNA synthetase family. Phe-tRNA synthetase alpha subunit type 1 subfamily. Tetramer of two alpha and two beta subunits. Mg(2+) is required as a cofactor.

It is found in the cytoplasm. The enzyme catalyses tRNA(Phe) + L-phenylalanine + ATP = L-phenylalanyl-tRNA(Phe) + AMP + diphosphate + H(+). The chain is Phenylalanine--tRNA ligase alpha subunit from Gloeobacter violaceus (strain ATCC 29082 / PCC 7421).